Reading from the N-terminus, the 493-residue chain is Glutamate--tRNA ligase (493 aa).

Positions 9–19 match the 'HIGH' region motif; sequence PSPTGDPHVGT. Residues 249–253 carry the 'KMSKS' region motif; that stretch reads KLSKR. Position 252 (lysine 252) interacts with ATP.

It belongs to the class-I aminoacyl-tRNA synthetase family. Glutamate--tRNA ligase type 1 subfamily. In terms of assembly, monomer.

It is found in the cytoplasm. The enzyme catalyses tRNA(Glu) + L-glutamate + ATP = L-glutamyl-tRNA(Glu) + AMP + diphosphate. Functionally, catalyzes the attachment of glutamate to tRNA(Glu) in a two-step reaction: glutamate is first activated by ATP to form Glu-AMP and then transferred to the acceptor end of tRNA(Glu). In Marinobacter nauticus (strain ATCC 700491 / DSM 11845 / VT8) (Marinobacter aquaeolei), this protein is Glutamate--tRNA ligase.